Consider the following 198-residue polypeptide: Myb-related protein 340 (198 aa).

HTH myb-type domains are found at residues 10–62 (DVEV…LNYL) and 63–117 (RPDV…IQKH). 2 consecutive DNA-binding regions (H-T-H motif) follow at residues 38 to 62 (WNTI…LNYL) and 90 to 113 (WSKI…NRTR).

As to expression, expressed only in flowers.

The protein localises to the nucleus. In terms of biological role, transcription factor. The polypeptide is Myb-related protein 340 (Antirrhinum majus (Garden snapdragon)).